Reading from the N-terminus, the 625-residue chain is MSVVSTTPASQDACYISLLGLAEYFRTSQPPNIKKCIQCLQALFTFQPPSKVEARTHLQMGQVLMAYTCNIDLARRHLEQAWSIAEPLMNFDDVKFDTASLLAQLHLKTEQSSHAKAMLRRAVELSQNNVYWHCKLLLQLSQIHASDREYSLASDLLAVGAESAEEAGATYLKVLFLLSRAMILMIERKTNDVLALLNSAGQIIDNNIPNPHQKEYLKVFFLVLQVCYYLALGQVKTVKPSLKQLQMSIQTIMAPNWPSDETIFGGNQLEMFVWLPKEQLYVLVYLVTVSHSMMAGYMDKAQKYTEKALTQIEKLKQQEDKSILSVFKVILLEHIVMCRMVMGNRELAIREIAAARDVCLAVPHRNLLKRHSAQLHCLIGLYSMSTSFFEHAERQFLVCVNETTERDLKLFANLNLAIIYLRTKREADLKQILDAVSTENTHTYSSQALMGGFYYVQGLHAFHKNSFHEAKRFLRETLKMANAEDLNRLTSCSLVLLSHVFLSIGNSKESMNMVTPAMQLASKIPDIHVQLWGSAILKDLHRMSKDAQHEKEAYANHVKYSENLIADQRKCVQSAHHELINWFQGNPPVTSNSSLNPAVTVPTTETSTSALQQPQQPAAQFGQFY.

TPR repeat units lie at residues 96–129, 451–484, and 491–524; these read FDTA…SQNN, GGFY…ANAE, and SCSL…ASKI. Over residues 600–611 the composition is skewed to polar residues; it reads TVPTTETSTSAL. Residues 600-625 form a disordered region; that stretch reads TVPTTETSTSALQQPQQPAAQFGQFY. Over residues 612–625 the composition is skewed to low complexity; the sequence is QQPQQPAAQFGQFY.

The protein belongs to the SCC4/mau-2 family. As to quaternary structure, interacts with Nipped-B to form the cohesin loading complex.

The protein localises to the nucleus. Its subcellular location is the nucleoplasm. Its function is as follows. Required for association of the cohesin complex with chromatin during interphase. Plays a role in sister chromatid cohesion and normal progression through prometaphase. The protein is MAU2 chromatid cohesion factor homolog of Drosophila mojavensis (Fruit fly).